A 367-amino-acid chain; its full sequence is Glutamate 5-kinase (367 aa).

An ATP-binding site is contributed by lysine 10. Substrate-binding residues include serine 50, aspartate 137, and asparagine 149. Residues 169 to 170 and 211 to 217 contribute to the ATP site; these read TD and TGGMETK. The 79-residue stretch at 275 to 353 folds into the PUA domain; sequence AGDITVDDGA…QDISDILGYE (79 aa).

This sequence belongs to the glutamate 5-kinase family.

It is found in the cytoplasm. The catalysed reaction is L-glutamate + ATP = L-glutamyl 5-phosphate + ADP. The protein operates within amino-acid biosynthesis; L-proline biosynthesis; L-glutamate 5-semialdehyde from L-glutamate: step 1/2. Its function is as follows. Catalyzes the transfer of a phosphate group to glutamate to form L-glutamate 5-phosphate. In Sodalis glossinidius (strain morsitans), this protein is Glutamate 5-kinase.